Reading from the N-terminus, the 358-residue chain is tRNA-specific 2-thiouridylase MnmA (358 aa).

ATP-binding positions include 8–15 (AMSGGVDS) and Met35. The interaction with target base in tRNA stretch occupies residues 95 to 97 (NPD). The Nucleophile role is filled by Cys100. Cysteines 100 and 194 form a disulfide. Gly124 lines the ATP pocket. Residues 144 to 146 (KDQ) form an interaction with tRNA region. The active-site Cysteine persulfide intermediate is the Cys194. Positions 301–302 (RY) are interaction with tRNA.

Belongs to the MnmA/TRMU family.

It localises to the cytoplasm. The enzyme catalyses S-sulfanyl-L-cysteinyl-[protein] + uridine(34) in tRNA + AH2 + ATP = 2-thiouridine(34) in tRNA + L-cysteinyl-[protein] + A + AMP + diphosphate + H(+). Catalyzes the 2-thiolation of uridine at the wobble position (U34) of tRNA, leading to the formation of s(2)U34. The sequence is that of tRNA-specific 2-thiouridylase MnmA from Chlamydia trachomatis serovar L2 (strain ATCC VR-902B / DSM 19102 / 434/Bu).